A 382-amino-acid polypeptide reads, in one-letter code: MQNAAPRLTFTLRDEERLMMKIGVFVPIGNNGWLISTHAPQYMPTFELNKAIVQKAEHYHFDFALSMIKLRGFGGKTEFWDHNLESFTLMAGLAAVTSRIQIYATAATLTLPPAIVARMAATIDSISGGRFGVNLVTGWQKPEYEQMGIWPGDDYFSRRYDYLTEYVQVLRDLWGTGKSDFKGDFFTMNDCRVSPQPSVPMKVICAGQSDAGMAFSAQYADFNFCFGKGVNTPTAFAPTAARMKQAAEQTGRDVGSYVLFMVIADETDDAARAKWEHYKAGADEEALSWLTEQSQKDTRSGTDTNVRQMADPTSAVNINMGTLVGSYASVARMLDEVASVPGAEGVLLTFDDFLSGIETFGERIQPLMQCRAHLPVLTQEVA.

Residues 68–69 (IK), Asn134, Glu143, 159–160 (RY), and Ser209 contribute to the FMN site.

Belongs to the NtaA/SnaA/DszA monooxygenase family. RutA subfamily.

The catalysed reaction is uracil + FMNH2 + NADH + O2 = (Z)-3-ureidoacrylate + FMN + NAD(+) + H2O + H(+). It catalyses the reaction thymine + FMNH2 + NADH + O2 = (Z)-2-methylureidoacrylate + FMN + NAD(+) + H2O + H(+). Functionally, catalyzes the pyrimidine ring opening between N-3 and C-4 by an unusual flavin hydroperoxide-catalyzed mechanism, adding oxygen atoms in the process to yield ureidoacrylate peracid, that immediately reacts with FMN forming ureidoacrylate and FMN-N(5)-oxide. The FMN-N(5)-oxide reacts spontaneously with NADH to produce FMN. Requires the flavin reductase RutF to regenerate FMN in vivo. This is Pyrimidine monooxygenase RutA (rutA) from Escherichia coli O157:H7.